The sequence spans 392 residues: MSTHPVLDWSRSAEHLRRSHGVTTDPRPDEDGHYPCVLTRGSGTRVYDLDGNAYLDLTGSFGSVLIGHAEPAVVRAVTDVLSEGNLFYTGASPRRLALAERLLDWFPWSEQAIFYRTGSCAVSAAARLAQHATGRNRVLSSGYHGWHDWHLEAVPEAKPKTFESYATEFHNDLALYRSWLDRHGEEIAAVVVTPEPHRFDHAYYQELREVAKEHGCLFVVDEVKTGFRAGAGGFSALAGIEPDAVTVSKGMANGHSISAVVGQRQLTQELSEAHVWSTYQNEQVGFAAALASLDFLERHDVAAVTRRTGEAVRQGVLQLFAEHGLPVGAPGWGPMFELDFDAADEGLAERLEAALLRHGIFCDTGDDFNMMFHTAEHTDELLERFAAALGDL.

Lys249 bears the N6-(pyridoxal phosphate)lysine mark.

It belongs to the class-III pyridoxal-phosphate-dependent aminotransferase family. It depends on pyridoxal 5'-phosphate as a cofactor.

The catalysed reaction is neamine + 2-oxoglutarate = 6'-oxoparomamine + L-glutamate. It carries out the reaction 2'-deamino-2'-hydroxyneamine + 2-oxoglutarate = 2'-deamino-2'-hydroxy-6'-dehydroparomamine + L-glutamate. It functions in the pathway antibiotic biosynthesis; kanamycin biosynthesis. Its function is as follows. Aminotransferase that has 6'-oxoglucosaminyl:L-glutamate aminotransferase activity by catalyzing pyridoxal-5'-phosphate-mediated transamination leading to the conversion of paromamine to neamine in the biosynthetic pathway of kanamycin B. The chain is 2'-deamino-2'-hydroxyneamine transaminase (kacL) from Streptomyces kanamyceticus.